We begin with the raw amino-acid sequence, 432 residues long: Luc7-like protein 3 (432 aa).

N-acetylmethionine is present on Met-1. Phosphoserine is present on residues Ser-3, Ser-110, and Ser-115. Positions 124-181 (KNEEKIQVLTDKIDVLLQQIEELGSEGKVEEAQGMMKLVEQLKEERELLRSTTSTIES) form a coiled coil. Lys-231 is subject to N6-acetyllysine. Positions 234 to 287 (LRKRTEEPDRDERLKKEKQEREEREKEREREREERERKRRREEEEREKERARDR) are enriched in basic and acidic residues. The interval 234–432 (LRKRTEEPDR…IKSEGDTQSN (199 aa)) is disordered. Residues 288–301 (ERRKRSRSRSRHSS) show a composition bias toward basic residues. The span at 302–311 (RTSDRRCSRS) shows a compositional bias: basic and acidic residues. The segment covering 312–367 (RDHKRSRSRERRRSRSRDRRRSRSHDRSERKHRSRSRDRRRSKSRDRKSYKHRSKS) has biased composition (basic residues). The span at 368 to 414 (RDREQDRKSKEKEKRGSDDKKSSVKSSSREKQSEDTNTESKESDTKN) shows a compositional bias: basic and acidic residues. Phosphoserine is present on Ser-420. The span at 421-432 (EDIKSEGDTQSN) shows a compositional bias: basic and acidic residues. A Glycyl lysine isopeptide (Lys-Gly) (interchain with G-Cter in SUMO1); alternate cross-link involves residue Lys-424. Lys-424 participates in a covalent cross-link: Glycyl lysine isopeptide (Lys-Gly) (interchain with G-Cter in SUMO2); alternate. A phosphoserine mark is found at Ser-425 and Ser-431.

This sequence belongs to the Luc7 family. In terms of assembly, may interact with SFRS1 and form homodimers. Interacts with JMJD6. Interacts with RBM25. Interacts with RSRC1 (via Arg/Ser-rich domain). Interacts with RRP1B.

It is found in the nucleus speckle. In terms of biological role, binds cAMP regulatory element DNA sequence. May play a role in RNA splicing. This is Luc7-like protein 3 (LUC7L3) from Bos taurus (Bovine).